The primary structure comprises 732 residues: Acetophenone carboxylase gamma subunit (732 aa).

Belongs to the HyuA family. As to quaternary structure, acetophenone carboxylase consists of five subunits; a heterooctameric subcomplex of two alpha (Apc1), two beta (Apc2), two gamma (Apc3) and two delta (Apc4) subunits assembles with the epsilon (Apc5) subunit in an unknown stoichiometry. It depends on Mg(2+) as a cofactor. Mn(2+) is required as a cofactor.

It is found in the cytoplasm. The enzyme catalyses acetophenone + hydrogencarbonate + 2 ATP + H2O = 3-oxo-3-phenylpropanoate + 2 ADP + 2 phosphate + 2 H(+). Inhibited by zinc ions, carbamoylphosphate and beta,gamma-imido-ATP. Its function is as follows. Catalyzes the carboxylation of acetophenone to form 3-oxo-3-phenylpropanoate (benzoylacetate) in the anaerobic catabolism of ethylbenzene. Also carboxylates propiophenone at the same rate and 4-acetyl-pyridine at lower rates. This Aromatoleum aromaticum (strain DSM 19018 / LMG 30748 / EbN1) (Azoarcus sp. (strain EbN1)) protein is Acetophenone carboxylase gamma subunit (apc3).